The following is a 141-amino-acid chain: Nucleoside diphosphate kinase (141 aa).

Lysine 11, phenylalanine 59, arginine 87, threonine 93, arginine 104, and asparagine 114 together coordinate ATP. The active-site Pros-phosphohistidine intermediate is the histidine 117.

It belongs to the NDK family. As to quaternary structure, homotetramer. It depends on Mg(2+) as a cofactor.

It is found in the cytoplasm. It catalyses the reaction a 2'-deoxyribonucleoside 5'-diphosphate + ATP = a 2'-deoxyribonucleoside 5'-triphosphate + ADP. It carries out the reaction a ribonucleoside 5'-diphosphate + ATP = a ribonucleoside 5'-triphosphate + ADP. Its function is as follows. Major role in the synthesis of nucleoside triphosphates other than ATP. The ATP gamma phosphate is transferred to the NDP beta phosphate via a ping-pong mechanism, using a phosphorylated active-site intermediate. This Herminiimonas arsenicoxydans protein is Nucleoside diphosphate kinase.